The sequence spans 1197 residues: Transient receptor potential cation channel subfamily A member 1 (1197 aa).

The Cytoplasmic portion of the chain corresponds to 1 to 753 (MTSGDKETPK…KWNSYGKYFH (753 aa)). 14 ANK repeats span residues 89–118 (KGRTAAHQAAARNRVNILRYIRDQNGDFNA), 122–151 (AGNTPLHIAVESDAYDALDYLLSIPVDTGV), 155–184 (KKQAPVHLATELNKVKSLRVMGQYRNVIDI), 190–219 (HGRTALHLAAIYDHEECARILITEFDACPR), 224–253 (NGYYPIHEAAKNASSKTMEVFFQWGEQRGC), 265–294 (EGNVPLHSAVHGGDIKAVELCLKSGAKIST), 298–327 (DLSTPVHLACAQGAIDIVKLMFEMQPMEKR), 336–365 (QKMTPLHCASMFDHPDIVSYLVAEGADINA), 369–398 (EHRSPLLLAASRSGWKTVHLLIRLGACISV), 443–472 (MGCSPLHYASRDGHIRSLENLIRLGACINL), 476–505 (NNESPLHFAARYGRYNTVRQLLDSEKGSFI), 512–541 (AGMTPLHISSQQGHTRVVQLLLNRGALLHR), 544–574 (TGRNPLQLAAMSGYTETIELLHSVHSHLLDQ), and 578–607 (DGNTALHLATMENKPHAISVLMSMGCKLVY). A helical membrane pass occupies residues 754–774 (LANLLIYSIFLVFVTIYSSLM). The Extracellular segment spans residues 775-827 (MNNIELKAGDNKTMSQYCNMGWEQLTMNLSQNPSVASQIRLDSCEERINRTTA). N-linked (GlcNAc...) asparagine glycosylation is found at Asn785, Asn802, and Asn823. A helical transmembrane segment spans residues 828-848 (ILFCAVVIVVYILLNSMRELI). At 849 to 856 (QIYQQKLH) the chain is on the cytoplasmic side. Residues 857-877 (YILETVNLISWVLYISALVMV) traverse the membrane as a helical segment. Topologically, residues 878 to 889 (TPAFQPDGGINT) are extracellular. The helical transmembrane segment at 890-910 (IHYSAASIAVFLSWFRLLLFL) threads the bilayer. The Cytoplasmic segment spans residues 911–932 (QRFDQVGIYVVMFLEILQTLIK). A helical membrane pass occupies residues 933 to 953 (VLMVFSILIIAFGLAFYILLS). The Extracellular portion of the chain corresponds to 954–968 (KIIDPQPNHLSFSNI). Positions 969-989 (PMSLLRTFSMMLGELDFVGTY) form an intramembrane region, pore-forming. Over 990–1004 (VNTYYRDQLKVPMTS) the chain is Extracellular. The chain crosses the membrane as a helical span at residues 1005–1025 (FLILSVFMILMPILLMNLLIG). Residues 1026–1197 (LAVGDIESVR…RAALSFNKSM (172 aa)) are Cytoplasmic-facing.

It belongs to the transient receptor (TC 1.A.4) family. Homotetramer.

The protein resides in the cell membrane. Functionally, essential for thermotaxis by sensing environmental temperature. Receptor-activated non-selective cation channel involved in detection of sensations such as temperature. Involved in heat nociception by being activated by warm temperature of about 24-29 degrees Celsius. This is Transient receptor potential cation channel subfamily A member 1 (TrpA1) from Drosophila melanogaster (Fruit fly).